The following is a 239-amino-acid chain: Ribonuclease PH (239 aa).

Phosphate-binding positions include Arg-86 and 124–126 (GTR).

Belongs to the RNase PH family. Homohexameric ring arranged as a trimer of dimers.

It carries out the reaction tRNA(n+1) + phosphate = tRNA(n) + a ribonucleoside 5'-diphosphate. In terms of biological role, phosphorolytic 3'-5' exoribonuclease that plays an important role in tRNA 3'-end maturation. Removes nucleotide residues following the 3'-CCA terminus of tRNAs; can also add nucleotides to the ends of RNA molecules by using nucleoside diphosphates as substrates, but this may not be physiologically important. Probably plays a role in initiation of 16S rRNA degradation (leading to ribosome degradation) during starvation. The chain is Ribonuclease PH from Rickettsia felis (strain ATCC VR-1525 / URRWXCal2) (Rickettsia azadi).